Consider the following 352-residue polypeptide: Holliday junction branch migration complex subunit RuvB (352 aa).

The interval 4-191 (TDKFSAPDRV…FGIVARLEFY (188 aa)) is large ATPase domain (RuvB-L). ATP-binding positions include Leu-30, Arg-31, Gly-72, Lys-75, Thr-76, Thr-77, 138–140 (EDY), Arg-181, Tyr-191, and Arg-228. A Mg(2+)-binding site is contributed by Thr-76. The interval 192 to 262 (TAEELARIVT…IADAALAMLD (71 aa)) is small ATPAse domain (RuvB-S). The tract at residues 265–352 (RVGFDLMDRK…GDSGDLIDGE (88 aa)) is head domain (RuvB-H). DNA contacts are provided by Arg-301, Arg-320, and Arg-325.

The protein belongs to the RuvB family. In terms of assembly, homohexamer. Forms an RuvA(8)-RuvB(12)-Holliday junction (HJ) complex. HJ DNA is sandwiched between 2 RuvA tetramers; dsDNA enters through RuvA and exits via RuvB. An RuvB hexamer assembles on each DNA strand where it exits the tetramer. Each RuvB hexamer is contacted by two RuvA subunits (via domain III) on 2 adjacent RuvB subunits; this complex drives branch migration. In the full resolvosome a probable DNA-RuvA(4)-RuvB(12)-RuvC(2) complex forms which resolves the HJ.

The protein localises to the cytoplasm. It catalyses the reaction ATP + H2O = ADP + phosphate + H(+). In terms of biological role, the RuvA-RuvB-RuvC complex processes Holliday junction (HJ) DNA during genetic recombination and DNA repair, while the RuvA-RuvB complex plays an important role in the rescue of blocked DNA replication forks via replication fork reversal (RFR). RuvA specifically binds to HJ cruciform DNA, conferring on it an open structure. The RuvB hexamer acts as an ATP-dependent pump, pulling dsDNA into and through the RuvAB complex. RuvB forms 2 homohexamers on either side of HJ DNA bound by 1 or 2 RuvA tetramers; 4 subunits per hexamer contact DNA at a time. Coordinated motions by a converter formed by DNA-disengaged RuvB subunits stimulates ATP hydrolysis and nucleotide exchange. Immobilization of the converter enables RuvB to convert the ATP-contained energy into a lever motion, pulling 2 nucleotides of DNA out of the RuvA tetramer per ATP hydrolyzed, thus driving DNA branch migration. The RuvB motors rotate together with the DNA substrate, which together with the progressing nucleotide cycle form the mechanistic basis for DNA recombination by continuous HJ branch migration. Branch migration allows RuvC to scan DNA until it finds its consensus sequence, where it cleaves and resolves cruciform DNA. In Cupriavidus pinatubonensis (strain JMP 134 / LMG 1197) (Cupriavidus necator (strain JMP 134)), this protein is Holliday junction branch migration complex subunit RuvB.